Here is a 749-residue protein sequence, read N- to C-terminus: ATP-dependent zinc metalloprotease FtsH 3 (749 aa).

A compositionally biased stretch (basic and acidic residues) spans 1 to 17; that stretch reads MTGDPPERRSNGDRLPA. Residues 1–67 form a disordered region; that stretch reads MTGDPPERRS…GRNGGGMRPF (67 aa). Residues 1–75 lie on the Cytoplasmic side of the membrane; it reads MTGDPPERRS…PFRFPGGRWG (75 aa). A helical transmembrane segment spans residues 76–96; that stretch reads ILVFILVLLGLNWWISSNALA. At 97–186 the chain is on the extracellular side; that stretch reads PSERVRVPYS…NASPADNGPS (90 aa). Residues 187 to 207 form a helical membrane-spanning segment; that stretch reads LLVSILLGFGPVILIIALFVF. The Cytoplasmic portion of the chain corresponds to 208-749; that stretch reads LSRRMAGAAG…LGGSVRAGDA (542 aa). 281-288 provides a ligand contact to ATP; sequence GQPGTGKT. Histidine 504 serves as a coordination point for Zn(2+). Residue glutamate 505 is part of the active site. Residues histidine 508 and aspartate 580 each coordinate Zn(2+). The span at 679-689 shows a compositional bias: basic and acidic residues; it reads GLEHMRPERVE. Residues 679–749 are disordered; that stretch reads GLEHMRPERV…LGGSVRAGDA (71 aa).

This sequence in the central section; belongs to the AAA ATPase family. The protein in the C-terminal section; belongs to the peptidase M41 family. In terms of assembly, homohexamer. It depends on Zn(2+) as a cofactor.

It is found in the cell membrane. Functionally, acts as a processive, ATP-dependent zinc metallopeptidase for both cytoplasmic and membrane proteins. Plays a role in the quality control of integral membrane proteins. The polypeptide is ATP-dependent zinc metalloprotease FtsH 3 (Conexibacter woesei (strain DSM 14684 / CCUG 47730 / CIP 108061 / JCM 11494 / NBRC 100937 / ID131577)).